The chain runs to 119 residues: Ribonuclease P protein component (119 aa).

It belongs to the RnpA family. Consists of a catalytic RNA component (M1 or rnpB) and a protein subunit.

The enzyme catalyses Endonucleolytic cleavage of RNA, removing 5'-extranucleotides from tRNA precursor.. RNaseP catalyzes the removal of the 5'-leader sequence from pre-tRNA to produce the mature 5'-terminus. It can also cleave other RNA substrates such as 4.5S RNA. The protein component plays an auxiliary but essential role in vivo by binding to the 5'-leader sequence and broadening the substrate specificity of the ribozyme. The polypeptide is Ribonuclease P protein component (Pasteurella multocida (strain Pm70)).